The following is a 610-amino-acid chain: UvrABC system protein C (610 aa).

The GIY-YIG domain occupies 19–97 (GAPGVYKMLD…IKRHKPRYNI (79 aa)). One can recognise a UVR domain in the interval 207 to 242 (EALIDRLAQRMEQAAQRLEFEKAARYRDQISNLRTV).

It belongs to the UvrC family. Interacts with UvrB in an incision complex.

Its subcellular location is the cytoplasm. Its function is as follows. The UvrABC repair system catalyzes the recognition and processing of DNA lesions. UvrC both incises the 5' and 3' sides of the lesion. The N-terminal half is responsible for the 3' incision and the C-terminal half is responsible for the 5' incision. The polypeptide is UvrABC system protein C (Methylococcus capsulatus (strain ATCC 33009 / NCIMB 11132 / Bath)).